Here is a 656-residue protein sequence, read N- to C-terminus: Mucin-20 (656 aa).

The signal sequence occupies residues 1–21 (MGSVWGLAVPLLVFCWKVGVS). Polar residues-rich tracts occupy residues 85–96 (ATSISSEVNSRD), 114–125 (PAASSLEAQTTS), and 159–170 (TTSPAPSFLDTQ). Disordered regions lie at residues 85–125 (ATSI…QTTS), 159–232 (TTSP…TQTI), and 329–348 (YLSSESSSSSDSSAGVLSSS). Low complexity predominate over residues 171-227 (TTSPEPSSLTTSPAPSSLITSPTPSSLTTSPAPSFLDTQTTSPAPSSLTTSPAPSSL). 5 repeat units span residues 180–188 (TTSPAPSSL), 189–197 (ITSPTPSSL), 198–206 (TTSPAPSFL), 210–218 (TTSPAPSSL), and 219–227 (TTSPAPSSL). The approximate repeats stretch occupies residues 180–227 (TTSPAPSSLITSPTPSSLTTSPAPSFLDTQTTSPAPSSLTTSPAPSSL). N-linked (GlcNAc...) asparagine glycosylation is found at N366 and N570. Residues 399–603 (TAALFTSEIL…WIRKTTKHDP (205 aa)) are involved in oligomerization. A compositionally biased stretch (polar residues) spans 560–573 (STTASTSKNPNITL). Residues 560-592 (STTASTSKNPNITLTKTTASPKPPTHPTTSAST) are disordered. An interaction with MET region spans residues 604 to 656 (GEDGGFLLVRLTVASPKDLTEHNAREKLMNQLRRELHARMPLVHMSFLSIRRG).

Interacts with MET; oligomerization increases affinity for MET. As to expression, highly expressed in kidney. Up-regulated in renal tissues during renal injury.

It localises to the secreted. The protein localises to the apical cell membrane. The protein resides in the basolateral cell membrane. Its subcellular location is the cell projection. It is found in the microvillus membrane. In terms of biological role, may regulate MET signaling cascade. Seems to decrease hepatocyte growth factor (HGF)-induced transient MAPK activation. Blocks GRB2 recruitment to MET thus suppressing the GRB2-RAS pathway. Inhibits HGF-induced proliferation of MMP1 and MMP9 expression. The chain is Mucin-20 (Muc20) from Mus musculus (Mouse).